Consider the following 304-residue polypeptide: Probable endonuclease 4 (304 aa).

Histidine 75, histidine 115, glutamate 151, aspartate 185, histidine 188, histidine 221, aspartate 234, histidine 236, and glutamate 266 together coordinate Zn(2+).

This sequence belongs to the AP endonuclease 2 family. Requires Zn(2+) as cofactor.

The enzyme catalyses Endonucleolytic cleavage to 5'-phosphooligonucleotide end-products.. Endonuclease IV plays a role in DNA repair. It cleaves phosphodiester bonds at apurinic or apyrimidinic (AP) sites, generating a 3'-hydroxyl group and a 5'-terminal sugar phosphate. In Ureaplasma urealyticum serovar 10 (strain ATCC 33699 / Western), this protein is Probable endonuclease 4.